Here is a 188-residue protein sequence, read N- to C-terminus: Elongation factor P (188 aa).

An N6-(3,6-diaminohexanoyl)-5-hydroxylysine modification is found at K34.

It belongs to the elongation factor P family. Post-translationally, may be beta-lysylated on the epsilon-amino group of Lys-34 by the combined action of EpmA and EpmB, and then hydroxylated on the C5 position of the same residue by EpmC (if this protein is present). Lysylation is critical for the stimulatory effect of EF-P on peptide-bond formation. The lysylation moiety may extend toward the peptidyltransferase center and stabilize the terminal 3-CCA end of the tRNA. Hydroxylation of the C5 position on Lys-34 may allow additional potential stabilizing hydrogen-bond interactions with the P-tRNA.

Its subcellular location is the cytoplasm. The protein operates within protein biosynthesis; polypeptide chain elongation. Involved in peptide bond synthesis. Alleviates ribosome stalling that occurs when 3 or more consecutive Pro residues or the sequence PPG is present in a protein, possibly by augmenting the peptidyl transferase activity of the ribosome. Modification of Lys-34 is required for alleviation. The chain is Elongation factor P from Klebsiella pneumoniae (strain 342).